The primary structure comprises 1101 residues: Endoglucanase C (1101 aa).

Positions 1-32 are cleaved as a signal peptide; sequence MVSRRSSQARGALTAVVATLALALAGSGTALA. CBM-cenC domains lie at 64-173 and 212-318; these read LCVA…TFCL and MCVD…EFCI. The interval 329–880 is catalytic; it reads PPPGYEPDTG…PDGCAPSACY (552 aa). The active-site Nucleophile is the Asp506. The active site involves His831. The interval 838 to 865 is disordered; it reads QLDPSLPSPPPGSLAGGPNSQAATWDPT. Catalysis depends on residues Asp882 and Glu891. Ig-like domains follow at residues 918-1006 and 1008-1097; these read TAPV…LTVE and AAPV…LAVQ.

It belongs to the glycosyl hydrolase 9 (cellulase E) family.

The catalysed reaction is Endohydrolysis of (1-&gt;4)-beta-D-glucosidic linkages in cellulose, lichenin and cereal beta-D-glucans.. Functionally, the biological conversion of cellulose to glucose generally requires three types of hydrolytic enzymes: (1) Endoglucanases which cut internal beta-1,4-glucosidic bonds; (2) Exocellobiohydrolases that cut the disaccharide cellobiose from the non-reducing end of the cellulose polymer chain; (3) Beta-1,4-glucosidases which hydrolyze the cellobiose and other short cello-oligosaccharides to glucose. This is Endoglucanase C (cenC) from Cellulomonas fimi (strain ATCC 484 / DSM 20113 / JCM 1341 / CCUG 24087 / LMG 16345 / NBRC 15513 / NCIMB 8980 / NCTC 7547 / NRS-133).